Reading from the N-terminus, the 377-residue chain is Alanine racemase (377 aa).

Lys-39 (proton acceptor; specific for D-alanine) is an active-site residue. Lys-39 is modified (N6-(pyridoxal phosphate)lysine). Arg-137 contributes to the substrate binding site. Residue Tyr-266 is the Proton acceptor; specific for L-alanine of the active site. A substrate-binding site is contributed by Met-314.

This sequence belongs to the alanine racemase family. Requires pyridoxal 5'-phosphate as cofactor.

It carries out the reaction L-alanine = D-alanine. Its pathway is amino-acid biosynthesis; D-alanine biosynthesis; D-alanine from L-alanine: step 1/1. Its function is as follows. Catalyzes the interconversion of L-alanine and D-alanine. May also act on other amino acids. This Symbiobacterium thermophilum (strain DSM 24528 / JCM 14929 / IAM 14863 / T) protein is Alanine racemase (alr).